We begin with the raw amino-acid sequence, 481 residues long: Inosine-5'-monophosphate dehydrogenase (481 aa).

CBS domains lie at Val-92–Val-148 and Met-152–Asn-209. NAD(+) is bound by residues Asp-244 and Gly-293–Gly-295. K(+)-binding residues include Gly-295 and Gly-297. Residue Ser-298 coordinates IMP. Cys-300 is a binding site for K(+). Residue Cys-300 is the Thioimidate intermediate of the active site. Residues Asp-333–Gly-335, Gly-356–Ser-357, and Tyr-380–Gly-384 contribute to the IMP site. The active-site Proton acceptor is the Arg-396. Glu-410 provides a ligand contact to IMP. Positions 464, 465, and 466 each coordinate K(+).

It belongs to the IMPDH/GMPR family. As to quaternary structure, homotetramer. Requires K(+) as cofactor.

The catalysed reaction is IMP + NAD(+) + H2O = XMP + NADH + H(+). The protein operates within purine metabolism; XMP biosynthesis via de novo pathway; XMP from IMP: step 1/1. Mycophenolic acid (MPA) is a non-competitive inhibitor that prevents formation of the closed enzyme conformation by binding to the same site as the amobile flap. In contrast, mizoribine monophosphate (MZP) is a competitive inhibitor that induces the closed conformation. MPA is a potent inhibitor of mammalian IMPDHs but a poor inhibitor of the bacterial enzymes. MZP is a more potent inhibitor of bacterial IMPDH. In terms of biological role, catalyzes the conversion of inosine 5'-phosphate (IMP) to xanthosine 5'-phosphate (XMP), the first committed and rate-limiting step in the de novo synthesis of guanine nucleotides, and therefore plays an important role in the regulation of cell growth. The sequence is that of Inosine-5'-monophosphate dehydrogenase from Helicobacter pylori (strain ATCC 700392 / 26695) (Campylobacter pylori).